The primary structure comprises 840 residues: MAEKISPGMQQYLDIKQDYPDAFLLFRMGDFYELFYEDAVNAAQILELTLTSRNKNSENPIPMAGVPHHAATEYIDKLVDLGYKVAVAEQMEDPKKAVGIVKRAVTQVITPGTTIDTANSVDNNFLVAIDFKAKRYALSYMDLSTGEFKVTELSEFSAVVGGIASLKAREIVVGFPLDEAQVKVFERQMNLLISEQFEIPENLLIELSGLTALENQAASKLLAYVKETQMRDLSHLQEVEHYEIKDFLQLDFATKSSLELTANKRENKKHGTLYWLLDETKTAMGTRMLRSWIDRPLVSNSAIQKRMEIVQVFLDHFFERSDLIEALKGVYDLERLASRVSFGKAVPVDFLQLANSLSNVPAIKNILEVLDETSLNELRSQLDEIPELSGLINSAISENASRTITEGGIIKKGYNVQLDKYREALENGTSWIAKLEADEKAKTGISTLRIDYNRKDGYYFHITQSQLNSVPEHFYRKATLKNSERFGSQELTEIEEIMLEAREKSSSLEYDLFMGLRAETEQYIGRLQALAKTIAEIDCLQSLSVVAEKQGYIRPTLTEGSRIVEIKGGRHAVVEAVMGAQEYVPNDIELPEQTDIQLITGPNMSGKSTYMRQFALTVIMAQIGSFVPAKTANLPIFDAIFTRIGASDNLISGESTFMVEMSEANHAIQKATSRSLIIFDELGRGTATYDGMALAQAIIEYVHEYIGAKTLFATHYHELTDLDKELDHLDNVHVATLEQNGNVTFLHKITDGPADKSYGIHVAKIAGLPQTLLERADLILQKLENKPLPAKKIADEQEQLSLFDFAENSSEIIEKIKGQNVDNMTAREALNFLWELKDSL.

601 to 608 contacts ATP; the sequence is GPNMSGKS.

The protein belongs to the DNA mismatch repair MutS family.

In terms of biological role, this protein is involved in the repair of mismatches in DNA. It is possible that it carries out the mismatch recognition step. This protein has a weak ATPase activity. This Lactococcus lactis subsp. cremoris (strain SK11) protein is DNA mismatch repair protein MutS.